Here is a 141-residue protein sequence, read N- to C-terminus: Large ribosomal subunit protein uL11 (141 aa).

This sequence belongs to the universal ribosomal protein uL11 family. As to quaternary structure, part of the ribosomal stalk of the 50S ribosomal subunit. Interacts with L10 and the large rRNA to form the base of the stalk. L10 forms an elongated spine to which L12 dimers bind in a sequential fashion forming a multimeric L10(L12)X complex. Post-translationally, one or more lysine residues are methylated.

Functionally, forms part of the ribosomal stalk which helps the ribosome interact with GTP-bound translation factors. This is Large ribosomal subunit protein uL11 from Moorella thermoacetica (strain ATCC 39073 / JCM 9320).